A 64-amino-acid chain; its full sequence is Alpha-like toxin BmK M2 (64 aa).

The LCN-type CS-alpha/beta domain occupies 2 to 64; the sequence is RDAYIAKPHN…VPIRVPGKCH (63 aa). 4 disulfides stabilise this stretch: C12–C63, C16–C36, C22–C46, and C26–C48.

This sequence belongs to the long (4 C-C) scorpion toxin superfamily. Sodium channel inhibitor family. Alpha subfamily. As to expression, expressed by the venom gland.

Its subcellular location is the secreted. In terms of biological role, alpha toxins bind voltage-independently at site-3 of sodium channels (Nav) and inhibit the inactivation of the activated channels, thereby blocking neuronal transmission. This toxin is active against both mammals and insects, and is classified as an alpha-like toxin. The sequence is that of Alpha-like toxin BmK M2 from Olivierus martensii (Manchurian scorpion).